The sequence spans 824 residues: Leucine--tRNA ligase (824 aa).

A 'HIGH' region motif is present at residues 40–50; that stretch reads PYPSGKIHMGH. The short motif at 580–584 is the 'KMSKS' region element; that stretch reads KMSKS. Lys583 is an ATP binding site.

It belongs to the class-I aminoacyl-tRNA synthetase family.

Its subcellular location is the cytoplasm. It catalyses the reaction tRNA(Leu) + L-leucine + ATP = L-leucyl-tRNA(Leu) + AMP + diphosphate. This is Leucine--tRNA ligase from Alkaliphilus metalliredigens (strain QYMF).